The sequence spans 397 residues: Bifunctional enzyme IspD/IspF (397 aa).

A 2-C-methyl-D-erythritol 4-phosphate cytidylyltransferase region spans residues 1-236 (MSIAAVILAA…QKKMQMFPDI (236 aa)). Residues 237-397 (RTGNGYDVHS…NVLYPGEIPK (161 aa)) form a 2-C-methyl-D-erythritol 2,4-cyclodiphosphate synthase region. 2 residues coordinate a divalent metal cation: D243 and H245. 4-CDP-2-C-methyl-D-erythritol 2-phosphate is bound by residues 243-245 (DVH) and 269-270 (HS). H277 serves as a coordination point for a divalent metal cation. 4-CDP-2-C-methyl-D-erythritol 2-phosphate-binding positions include 291–293 (DIG), 367–370 (TTNE), F374, and R377.

In the N-terminal section; belongs to the IspD/TarI cytidylyltransferase family. IspD subfamily. This sequence in the C-terminal section; belongs to the IspF family. A divalent metal cation is required as a cofactor.

It catalyses the reaction 2-C-methyl-D-erythritol 4-phosphate + CTP + H(+) = 4-CDP-2-C-methyl-D-erythritol + diphosphate. The catalysed reaction is 4-CDP-2-C-methyl-D-erythritol 2-phosphate = 2-C-methyl-D-erythritol 2,4-cyclic diphosphate + CMP. Its pathway is isoprenoid biosynthesis; isopentenyl diphosphate biosynthesis via DXP pathway; isopentenyl diphosphate from 1-deoxy-D-xylulose 5-phosphate: step 2/6. It functions in the pathway isoprenoid biosynthesis; isopentenyl diphosphate biosynthesis via DXP pathway; isopentenyl diphosphate from 1-deoxy-D-xylulose 5-phosphate: step 4/6. Its function is as follows. Bifunctional enzyme that catalyzes the formation of 4-diphosphocytidyl-2-C-methyl-D-erythritol from CTP and 2-C-methyl-D-erythritol 4-phosphate (MEP) (IspD), and catalyzes the conversion of 4-diphosphocytidyl-2-C-methyl-D-erythritol 2-phosphate (CDP-ME2P) to 2-C-methyl-D-erythritol 2,4-cyclodiphosphate (ME-CPP) with a corresponding release of cytidine 5-monophosphate (CMP) (IspF). This is Bifunctional enzyme IspD/IspF from Bartonella henselae (strain ATCC 49882 / DSM 28221 / CCUG 30454 / Houston 1) (Rochalimaea henselae).